The sequence spans 257 residues: Adenosylcobinamide-GDP ribazoletransferase (257 aa).

The next 4 membrane-spanning stretches (helical) occupy residues 28–48 (FARS…LVAL), 50–70 (LFVP…VYAV), 110–130 (VALA…VEVA), and 199–219 (WPQV…AALV).

This sequence belongs to the CobS family. Requires Mg(2+) as cofactor.

It is found in the cell membrane. The catalysed reaction is alpha-ribazole + adenosylcob(III)inamide-GDP = adenosylcob(III)alamin + GMP + H(+). It catalyses the reaction alpha-ribazole 5'-phosphate + adenosylcob(III)inamide-GDP = adenosylcob(III)alamin 5'-phosphate + GMP + H(+). It participates in cofactor biosynthesis; adenosylcobalamin biosynthesis; adenosylcobalamin from cob(II)yrinate a,c-diamide: step 7/7. Functionally, joins adenosylcobinamide-GDP and alpha-ribazole to generate adenosylcobalamin (Ado-cobalamin). Also synthesizes adenosylcobalamin 5'-phosphate from adenosylcobinamide-GDP and alpha-ribazole 5'-phosphate. The protein is Adenosylcobinamide-GDP ribazoletransferase of Halorubrum lacusprofundi (strain ATCC 49239 / DSM 5036 / JCM 8891 / ACAM 34).